We begin with the raw amino-acid sequence, 183 residues long: Putative manganese efflux pump MntP (183 aa).

6 helical membrane passes run 6–26 (LFLI…CIGL), 40–60 (IYFG…GFLF), 64–84 (IATM…IIMI), 101–121 (MNII…FTAL), 135–155 (LFIG…SKYL), and 158–178 (IDVI…FFGL).

It belongs to the MntP (TC 9.B.29) family.

Its subcellular location is the cell membrane. Probably functions as a manganese efflux pump. This is Putative manganese efflux pump MntP from Clostridium tetani (strain Massachusetts / E88).